Here is a 61-residue protein sequence, read N- to C-terminus: Small ribosomal subunit protein uS14 (61 aa).

Positions 24, 27, 40, and 43 each coordinate Zn(2+).

The protein belongs to the universal ribosomal protein uS14 family. Zinc-binding uS14 subfamily. As to quaternary structure, part of the 30S ribosomal subunit. Contacts proteins S3 and S10. Zn(2+) serves as cofactor.

Its function is as follows. Binds 16S rRNA, required for the assembly of 30S particles and may also be responsible for determining the conformation of the 16S rRNA at the A site. This Roseiflexus castenholzii (strain DSM 13941 / HLO8) protein is Small ribosomal subunit protein uS14.